The sequence spans 245 residues: Probable phosphatase YcdX (245 aa).

Zn(2+) is bound by residues His-7, His-9, His-15, His-40, Glu-73, His-101, His-131, Asp-192, and His-194.

The protein belongs to the PHP family. As to quaternary structure, homotrimer. The cofactor is Zn(2+).

This is Probable phosphatase YcdX from Shigella dysenteriae serotype 1 (strain Sd197).